The sequence spans 301 residues: Structure-specific endonuclease subunit SLX1 (301 aa).

One can recognise a GIY-YIG domain in the interval 12–95 (AFYCCYLLRS…QHPYQTRFIK (84 aa)). An SLX1-type zinc finger spans residues 216 to 283 (CAICEKIVDY…IPTSGQCPNC (68 aa)).

Belongs to the SLX1 family. In terms of assembly, forms a heterodimer with SLX4. A divalent metal cation serves as cofactor.

It is found in the nucleus. In terms of biological role, catalytic subunit of the SLX1-SLX4 structure-specific endonuclease that resolves DNA secondary structures generated during DNA repair and recombination. Has endonuclease activity towards branched DNA substrates, introducing single-strand cuts in duplex DNA close to junctions with ss-DNA. The chain is Structure-specific endonuclease subunit SLX1 from Eremothecium gossypii (strain ATCC 10895 / CBS 109.51 / FGSC 9923 / NRRL Y-1056) (Yeast).